The primary structure comprises 406 residues: MADGNEDARAEDMPGPAFEGYEAMELACPAERSGHVAVSDGRHMFVWGGYKSNQVRGLYDFYLPREELWIYNMETGRWKKINTEGDVPPSMSGSCAVCVDRVLYLFGGHHSRGNTNKFYMLDSRSADRVLQWERIDCQGIPPSSKDKLGVWVYKNKLIFFGGYGYLPEDKVLGTFEFDETSFWNSSHPRGWNDHVHILDTETFAWSQPITTGKAPSPRAAHACATVGNKGFVFGGRYRDARMNDLHYLNLDTWEWNELIPQGICPVGRSWHSLTPVSSDHLFLFGGFTTEKQPLSDAWTYCISKNEWIQFNHPYVEKPRLWHTACASDEGEVIVFGGCANNLLVHHRAAHSNEVLIFSVQPKSLVRLSLEAVICFKEMLANSWSCLPKHLLHSVNQRFGSNNTSGS.

Kelch repeat units follow at residues Glu31 to Gly85, Ser92 to Asp136, Leu148 to Gln207, His221 to Ile259, His271 to Asn311, and His322 to Val359.

As to quaternary structure, component of a CRL2(KLHDC2) E3 ubiquitin-protein ligase complex, also named ECS(KLHDC2) complex, composed of CUL2, Elongin BC (ELOB and ELOC), RBX1 and substrate-specific adapter KLHDC2. May form oligomers as a KLHDC2-ELOB-ELOC complex; this interaction is autoinhibitory for the E3 ligase complex as the substrate-binding site of KLHDC2 is blocked in the oligomer. Interacts with CREB3; interaction is direct and specific as it does not interact with CREB1, ATF4, ATF6, JUN, FOS, CEBPA or herpes simplex virus transactivator VP16. Post-translationally, autoubiquitinated by the CRL2(KLHDC2) E3 ligase complex.

The protein localises to the nucleus. It participates in protein modification; protein ubiquitination. Substrate-recognition component of a Cul2-RING (CRL2) E3 ubiquitin-protein ligase complex of the DesCEND (destruction via C-end degrons) pathway, which recognizes a C-degron located at the extreme C terminus of target proteins, leading to their ubiquitination and degradation. The C-degron recognized by the DesCEND pathway is usually a motif of less than ten residues and can be present in full-length proteins, truncated proteins or proteolytically cleaved forms. The CRL2(KLHDC2) complex specifically recognizes proteins with a diglycine (Gly-Gly) at the C-terminus, leading to their ubiquitination and degradation. The CRL2(KLHDC2) complex mediates ubiquitination and degradation of truncated SELENOK and SELENOS selenoproteins produced by failed UGA/Sec decoding, which end with a diglycine. The CRL2(KLHDC2) complex also recognizes proteolytically cleaved proteins ending with Gly-Gly, such as the N-terminal fragment of USP1, leading to their degradation. May also act as an indirect repressor of CREB3-mediated transcription by interfering with CREB3-DNA-binding. This is Kelch domain-containing protein 2 from Rattus norvegicus (Rat).